A 366-amino-acid polypeptide reads, in one-letter code: NAD(P)H-quinone oxidoreductase subunit 1, chloroplastic (366 aa).

Transmembrane regions (helical) follow at residues W29–V49, L97–I117, I130–G150, V166–L186, F202–A222, F254–V274, V307–V327, and L340–A360.

Belongs to the complex I subunit 1 family. In terms of assembly, NDH is composed of at least 16 different subunits, 5 of which are encoded in the nucleus.

The protein localises to the plastid. It localises to the chloroplast thylakoid membrane. It catalyses the reaction a plastoquinone + NADH + (n+1) H(+)(in) = a plastoquinol + NAD(+) + n H(+)(out). The catalysed reaction is a plastoquinone + NADPH + (n+1) H(+)(in) = a plastoquinol + NADP(+) + n H(+)(out). Its function is as follows. NDH shuttles electrons from NAD(P)H:plastoquinone, via FMN and iron-sulfur (Fe-S) centers, to quinones in the photosynthetic chain and possibly in a chloroplast respiratory chain. The immediate electron acceptor for the enzyme in this species is believed to be plastoquinone. Couples the redox reaction to proton translocation, and thus conserves the redox energy in a proton gradient. The sequence is that of NAD(P)H-quinone oxidoreductase subunit 1, chloroplastic from Anthoceros angustus (Hornwort).